A 417-amino-acid polypeptide reads, in one-letter code: Leucine-rich repeat-containing protein 42 (417 aa).

LRR repeat units follow at residues 167-188 (CLHS…LAHL), 195-215 (SLTE…QKMT), 227-248 (KLKV…CFLF), and 252-273 (LLKF…LKKI). The interval 360-390 (FFRPKEQKDPDSSNSEKRRHSTKRTGADCVQ) is disordered. Basic and acidic residues predominate over residues 362-375 (RPKEQKDPDSSNSE).

The protein belongs to the LRRC42 family.

This chain is Leucine-rich repeat-containing protein 42 (lrrc42), found in Xenopus laevis (African clawed frog).